Reading from the N-terminus, the 872-residue chain is Chaperone protein ClpB 2 (872 aa).

The Clp R domain occupies 6-148 (PNQFTEKAWE…KNIIKQVRGS (143 aa)). 2 repeat regions span residues 9–73 (FTEK…IQRQ) and 85–148 (LGRS…VRGS). Positions 161-342 (QSLEKYGRDL…RRFQQVYVDQ (182 aa)) are NBD1. 208-215 (GEPGVGKT) is an ATP binding site. A linker region spans residues 343 to 551 (PSVEDTISIL…IAEIISKWTG (209 aa)). The stretch at 393–527 (IDLVDEAAAR…TERELSQTQG (135 aa)) forms a coiled coil. Residues 561–772 (EKEKLLHLED…RIDEVIIFHS (212 aa)) form an NBD2 region. Position 611–618 (611–618 (GPTGVGKT)) interacts with ATP. Residues 773–872 (LDKKELRQIV…SRLPVEVFSS (100 aa)) are C-terminal.

The protein belongs to the ClpA/ClpB family. Homohexamer. The oligomerization is ATP-dependent.

Its subcellular location is the cytoplasm. Its function is as follows. Part of a stress-induced multi-chaperone system, it is involved in the recovery of the cell from heat-induced damage, in cooperation with DnaK, DnaJ and GrpE. Acts before DnaK, in the processing of protein aggregates. Protein binding stimulates the ATPase activity; ATP hydrolysis unfolds the denatured protein aggregates, which probably helps expose new hydrophobic binding sites on the surface of ClpB-bound aggregates, contributing to the solubilization and refolding of denatured protein aggregates by DnaK. This is Chaperone protein ClpB 2 (clpB2) from Nostoc sp. (strain PCC 7120 / SAG 25.82 / UTEX 2576).